We begin with the raw amino-acid sequence, 237 residues long: Arginine-binding periplasmic protein (237 aa).

The first 18 residues, 1–18 (MKKTLLTLLFGCVVTAQA), serve as a signal peptide directing secretion.

Belongs to the bacterial solute-binding protein 3 family.

The protein resides in the periplasm. Its function is as follows. Binds arginine; part of the arginine periplasmic transport system. The polypeptide is Arginine-binding periplasmic protein (lapT) (Mannheimia haemolytica (Pasteurella haemolytica)).